Consider the following 261-residue polypeptide: Thioesterase AMT4 (261 aa).

The protein belongs to the AMT4 thioesterase family.

Its pathway is mycotoxin biosynthesis. In terms of biological role, thioesterase; part of the gene clusters that mediate the biosynthesis of AM-toxins, host-selective toxins (HSTs) causing Alternaria blotch on apple, a worldwide distributed disease. AM-toxins are cyclic depsipeptides containing the 3 residues 2-hydroxy-isovaleric acid (2-HIV), dehydroalanine, L-alanine which are common for all 3 AM-toxins I to III. The fourth precursor is L-alpha-amino-methoxyphenyl-valeric acid (L-Amv) for AM-toxin I, L-alpha-amino-phenyl-valeric acid (L-Apv) for AM-toxin II, and L-alpha-amino-hydroxyphenyl-valeric acid (L-Ahv) for AM-toxin III. AM-toxins have two target sites for affecting susceptible apple cells; they cause invagination of the plasma membrane and electrolyte loss and chloroplast disorganization. The non-ribosomal peptide synthetase AMT1 contains 4 catalytic modules and is responsible for activation of each residue in AM-toxin. The aldo-keto reductase AMT2 catalyzes the conversion of 2-keto-isovaleric acid (2-KIV) to 2-hydroxy-isovaleric acid (2-HIV), one of the precursor residues incorporated by AMT1 during AM-toxin biosynthesis, by reduction of its ketone to an alcohol. The cytochrome P450 monooxygenase AMT3 and the thioesterase AMT4 are also important for AM-toxin production, but their exact function within the AM-toxin biosynthesis are not known yet. Up to 21 proteins (including AMT1 to AMT4) are predicted to be involved in AM-toxin biosynthesis since their expression ishighly up-regulated in AM-toxin-producing cultures. The chain is Thioesterase AMT4 from Alternaria alternata (Alternaria rot fungus).